The chain runs to 342 residues: 6-hydroxytryprostatin B O-methyltransferase (342 aa).

S-adenosyl-L-methionine is bound at residue D201. H244 acts as the Proton acceptor in catalysis.

Belongs to the class I-like SAM-binding methyltransferase superfamily. Cation-independent O-methyltransferase family. In terms of assembly, homodimer.

It catalyses the reaction 6-hydroxytryprostatin B + S-adenosyl-L-methionine = tryprostatin A + S-adenosyl-L-homocysteine + H(+). Its pathway is alkaloid biosynthesis. In terms of biological role, 6-hydroxytryprostatin B O-methyltransferase; part of the gene cluster that mediates the biosynthesis of fumitremorgins, indole alkaloids that carry not only intriguing chemical structures, but also interesting biological and pharmacological activities. The biosynthesis of fumitremorgin-type alkaloids begins by condensation of the two amino acids L-tryptophan and L-proline to brevianamide F, catalyzed by the non-ribosomal peptide synthetase ftmA. Brevianamide F is then prenylated by the prenyltransferase ftmPT1/ftmB in the presence of dimethylallyl diphosphate, resulting in the formation of tryprostatin B. The three cytochrome P450 monooxygenases, ftmP450-1/ftmC, ftmP450-2/ftmE and ftmP450-3/FtmG, are responsible for the conversion of tryprostatin B to 6-hydroxytryprostatin B, tryprostatin A to fumitremorgin C and fumitremorgin C to 12,13-dihydroxyfumitremorgin C, respectively. The putative methyltransferase ftmMT/ftmD is expected for the conversion of 6-hydroxytryprostatin B to tryprostatin A. FtmPT2/FtmH catalyzes the prenylation of 12,13-dihydroxyfumitre-morgin C in the presence of dimethylallyl diphosphate, resulting in the formation of fumitremorgin B. Fumitremorgin B is further converted to verruculogen by ftmOx1/ftmF via the insertion of an endoperoxide bond between the two prenyl moieties. In some fungal species, verruculogen is further converted to fumitremorgin A, but the enzymes involved in this step have not been identified yet. The protein is 6-hydroxytryprostatin B O-methyltransferase of Aspergillus fumigatus (Neosartorya fumigata).